The primary structure comprises 883 residues: Lethal(3)malignant brain tumor-like protein 3 (883 aa).

Residues methionine 1 to tryptophan 64 form an interaction with RBPJ. Required for transcription repressor activity on Notch target genes region. Over residues histidine 146–arginine 156 the composition is skewed to basic and acidic residues. Positions histidine 146–glycine 223 are disordered. 2 stretches are compositionally biased toward acidic residues: residues aspartate 157–aspartate 166 and aspartate 185–methionine 194. 3 MBT repeats span residues tryptophan 232–proline 332, phenylalanine 340–proline 439, and phenylalanine 448–proline 543. A CCHHC-type; degenerate zinc finger spans residues leucine 549–glutamate 593. Residues isoleucine 595–glutamine 768 are disordered. The segment covering lysine 616–proline 662 has biased composition (basic and acidic residues). A Glycyl lysine isopeptide (Lys-Gly) (interchain with G-Cter in SUMO2) cross-link involves residue lysine 638. Low complexity-rich tracts occupy residues threonine 663 to glutamine 742 and glutamine 749 to glutamine 768. Residues tryptophan 811–alanine 875 enclose the SAM domain.

In terms of assembly, interacts with RNF2. Interacts (via SAM domain) with SAMD1 (via SAM domain); the interaction mediates L3MBTL3 binding to chromatin. Interacts with RBPJ; the interaction is required for L3MBTL3 localization to chromatin and is impaired the Notch-derived peptides containing the intracellular domain (NICD). Interacts (via SAM domain) with KDM1A. Interacts with DCAF5. Interacts with DNMT1. Interacts with E2F1. Interacts with SOX2. Interacts with SFMBT1. In terms of tissue distribution, detected in hematopoietic progenitor cells in fetal liver. Detected in adult bone marrow, heart, brain, spleen, lung, liver, kidney and testis.

Its subcellular location is the nucleus. Functionally, is a negative regulator of Notch target genes expression, required for RBPJ-mediated transcriptional repression. It recruits KDM1A to Notch-responsive elements and promotes KDM1A-mediated H3K4me demethylation. Involved in the regulation of ubiquitin-dependent degradation of a set of methylated non-histone proteins, including SOX2. It acts as an adapter recruiting the CRL4-DCAF5 E3 ubiquitin ligase complex to methylated target proteins. Also involved in the regulation of ubiquitin-dependent degradation of methylated DNMT1 and E2F1. Required for normal maturation of myeloid progenitor cells. In Mus musculus (Mouse), this protein is Lethal(3)malignant brain tumor-like protein 3.